Consider the following 527-residue polypeptide: Phosphoenolpyruvate carboxykinase (ATP) (527 aa).

The substrate site is built by arginine 56, tyrosine 192, and lysine 198. ATP is bound by residues lysine 198, histidine 217, and 233-241 (GLSGTGKTT). Positions 198 and 217 each coordinate Mn(2+). Residue aspartate 254 coordinates Mn(2+). ATP is bound by residues glutamate 282, arginine 319, and threonine 444. Arginine 319 lines the substrate pocket.

This sequence belongs to the phosphoenolpyruvate carboxykinase (ATP) family. Mn(2+) is required as a cofactor.

Its subcellular location is the cytoplasm. The catalysed reaction is oxaloacetate + ATP = phosphoenolpyruvate + ADP + CO2. The protein operates within carbohydrate biosynthesis; gluconeogenesis. In terms of biological role, involved in the gluconeogenesis. Catalyzes the conversion of oxaloacetate (OAA) to phosphoenolpyruvate (PEP) through direct phosphoryl transfer between the nucleoside triphosphate and OAA. The polypeptide is Phosphoenolpyruvate carboxykinase (ATP) (Bacillus subtilis (strain 168)).